The following is a 364-amino-acid chain: Selenide, water dikinase (364 aa).

Residue U25 is part of the active site. A non-standard amino acid (selenocysteine) is located at residue U25. ATP-binding positions include K28, 46–48 (GYD), D66, D89, and 141–143 (GQT). D48 contributes to the Mg(2+) binding site. D89 contacts Mg(2+). Position 244 (D244) interacts with Mg(2+).

This sequence belongs to the selenophosphate synthase 1 family. Class II subfamily. Homodimer. The cofactor is Mg(2+).

The enzyme catalyses hydrogenselenide + ATP + H2O = selenophosphate + AMP + phosphate + 2 H(+). Synthesizes selenophosphate from selenide and ATP. The chain is Selenide, water dikinase (selD) from Dictyostelium discoideum (Social amoeba).